The following is a 102-amino-acid chain: NADH-quinone oxidoreductase subunit K (102 aa).

3 consecutive transmembrane segments (helical) span residues 5–25 (IAHY…GIFL), 31–51 (IIIL…FVAF), and 66–86 (FILT…VVFF).

It belongs to the complex I subunit 4L family. As to quaternary structure, NDH-1 is composed of 14 different subunits. Subunits NuoA, H, J, K, L, M, N constitute the membrane sector of the complex.

It is found in the cell inner membrane. The enzyme catalyses a quinone + NADH + 5 H(+)(in) = a quinol + NAD(+) + 4 H(+)(out). NDH-1 shuttles electrons from NADH, via FMN and iron-sulfur (Fe-S) centers, to quinones in the respiratory chain. The immediate electron acceptor for the enzyme in this species is believed to be ubiquinone. Couples the redox reaction to proton translocation (for every two electrons transferred, four hydrogen ions are translocated across the cytoplasmic membrane), and thus conserves the redox energy in a proton gradient. This Bartonella bacilliformis (strain ATCC 35685 / KC583 / Herrer 020/F12,63) protein is NADH-quinone oxidoreductase subunit K.